Consider the following 130-residue polypeptide: Ribosome-binding factor A (130 aa).

The tract at residues 111-130 is disordered; that stretch reads RDLDDVGPEATSSDEDAEQR.

The protein belongs to the RbfA family. Monomer. Binds 30S ribosomal subunits, but not 50S ribosomal subunits or 70S ribosomes.

The protein localises to the cytoplasm. Functionally, one of several proteins that assist in the late maturation steps of the functional core of the 30S ribosomal subunit. Associates with free 30S ribosomal subunits (but not with 30S subunits that are part of 70S ribosomes or polysomes). Required for efficient processing of 16S rRNA. May interact with the 5'-terminal helix region of 16S rRNA. The polypeptide is Ribosome-binding factor A (Xanthomonas axonopodis pv. citri (strain 306)).